Reading from the N-terminus, the 134-residue chain is MIEVGEYKVKEGLYYTKDHEWAQVLDDGTVLVGISDYAQKELGDLAYVELPEVGKEVSKGDVLCEIESVKAVSEVYAPVSGEVIEVNEALEDSPELLNEDPYENWIAKLKPTNLEEELKELMDAQAYAEYLRSL.

The Lipoyl-binding domain occupies 29 to 110 (TVLVGISDYA…PYENWIAKLK (82 aa)). Position 70 is an N6-lipoyllysine (Lys-70).

Belongs to the GcvH family. As to quaternary structure, the glycine cleavage system is composed of four proteins: P, T, L and H. (R)-lipoate serves as cofactor.

In terms of biological role, the glycine cleavage system catalyzes the degradation of glycine. The H protein shuttles the methylamine group of glycine from the P protein to the T protein. This chain is Probable glycine cleavage system H protein, found in Thermococcus kodakarensis (strain ATCC BAA-918 / JCM 12380 / KOD1) (Pyrococcus kodakaraensis (strain KOD1)).